The chain runs to 365 residues: Chorismate synthase (365 aa).

The interval Met41–Arg60 is disordered. NADP(+) contacts are provided by Arg48 and Arg54. FMN is bound by residues Arg125–Ser127, Asn238–Ala239, Gly278, Lys293–Ser297, and Arg319.

This sequence belongs to the chorismate synthase family. As to quaternary structure, homotetramer. FMNH2 is required as a cofactor.

It carries out the reaction 5-O-(1-carboxyvinyl)-3-phosphoshikimate = chorismate + phosphate. The protein operates within metabolic intermediate biosynthesis; chorismate biosynthesis; chorismate from D-erythrose 4-phosphate and phosphoenolpyruvate: step 7/7. Its function is as follows. Catalyzes the anti-1,4-elimination of the C-3 phosphate and the C-6 proR hydrogen from 5-enolpyruvylshikimate-3-phosphate (EPSP) to yield chorismate, which is the branch point compound that serves as the starting substrate for the three terminal pathways of aromatic amino acid biosynthesis. This reaction introduces a second double bond into the aromatic ring system. The polypeptide is Chorismate synthase (Shewanella amazonensis (strain ATCC BAA-1098 / SB2B)).